The following is a 223-amino-acid chain: Neurotrophic factor BDNF precursor form (223 aa).

The first 5 residues, 1-5, serve as a signal peptide directing secretion; that stretch reads SCMKA. Residues 6-114 constitute a propeptide that is removed on maturation; sequence APMKEVGVRG…AANMSXRVRR (109 aa). Asn-107 carries N-linked (GlcNAc...) asparagine glycosylation. Cystine bridges form between Cys-127–Cys-194 and Cys-172–Cys-223.

The protein belongs to the NGF-beta family.

It is found in the secreted. Functionally, promotes the survival of neuronal populations that are all located either in the central nervous system or directly connected to it. The polypeptide is Neurotrophic factor BDNF precursor form (BDNF) (Eryx jayakari (Arabian sand boa)).